The primary structure comprises 254 residues: Probable pectate lyase E (254 aa).

The N-terminal stretch at 1 to 17 is a signal peptide; sequence MLQSLLLLPLFLTSAFA. Asn175 carries N-linked (GlcNAc...) asparagine glycosylation. Positions 228-254 are disordered; sequence NNNGKEPKKKSSGPSKACEYNQPLKKC.

The protein belongs to the polysaccharide lyase 3 family. It depends on Ca(2+) as a cofactor.

The protein localises to the secreted. It carries out the reaction Eliminative cleavage of (1-&gt;4)-alpha-D-galacturonan to give oligosaccharides with 4-deoxy-alpha-D-galact-4-enuronosyl groups at their non-reducing ends.. In terms of biological role, pectinolytic enzyme consist of four classes of enzymes: pectin lyase, polygalacturonase, pectin methylesterase and rhamnogalacturonase. Among pectinolytic enzymes, pectin lyase is the most important in depolymerization of pectin, since it cleaves internal glycosidic bonds of highly methylated pectins. Favors pectate, the anion, over pectin, the methyl ester. This Aspergillus clavatus (strain ATCC 1007 / CBS 513.65 / DSM 816 / NCTC 3887 / NRRL 1 / QM 1276 / 107) protein is Probable pectate lyase E (plyE).